A 392-amino-acid polypeptide reads, in one-letter code: Putative glutamate--cysteine ligase 2 (392 aa).

Residues 1 to 21 (MMPVSGWRAVSSAPASSSAGR) form a disordered region. Positions 9 to 19 (AVSSAPASSSA) are enriched in low complexity.

The protein belongs to the glutamate--cysteine ligase type 2 family. YbdK subfamily.

It carries out the reaction L-cysteine + L-glutamate + ATP = gamma-L-glutamyl-L-cysteine + ADP + phosphate + H(+). Its function is as follows. ATP-dependent carboxylate-amine ligase which exhibits weak glutamate--cysteine ligase activity. The polypeptide is Putative glutamate--cysteine ligase 2 (Mycobacterium ulcerans (strain Agy99)).